Reading from the N-terminus, the 155-residue chain is Putative pre-16S rRNA nuclease (155 aa).

This sequence belongs to the YqgF nuclease family.

It localises to the cytoplasm. Its function is as follows. Could be a nuclease involved in processing of the 5'-end of pre-16S rRNA. The polypeptide is Putative pre-16S rRNA nuclease (Xylella fastidiosa (strain M23)).